The following is a 552-amino-acid chain: Two-component response regulator ARR10 (552 aa).

The 116-residue stretch at 18–133 (RVLAVDDDQT…ELKNIWQHVV (116 aa)) folds into the Response regulatory domain. At aspartate 69 the chain carries 4-aspartylphosphate. Positions 139-181 (KKNKSNVSNGSGNCDKANRKRKEQYEEEEEEERGNDNDDPTAQ) are disordered. A coiled-coil region spans residues 151-173 (NCDKANRKRKEQYEEEEEEERGN). Residues 163–177 (YEEEEEEERGNDNDD) are compositionally biased toward acidic residues. Positions 182-185 (KKPR) match the Nuclear localization signal motif. A DNA-binding region (myb-like GARP) is located at residues 185–235 (RVLWTHELHNKFLAAVDHLGVERAVPKKILDLMNVDKLTRENVASHLQKFR).

Belongs to the ARR family. Type-B subfamily. Binds the target DNA as a monomer. Post-translationally, two-component system major event consists of a His-to-Asp phosphorelay between a sensor histidine kinase (HK) and a response regulator (RR). In plants, the His-to-Asp phosphorelay involves an additional intermediate named Histidine-containing phosphotransfer protein (HPt). This multistep phosphorelay consists of a His-Asp-His-Asp sequential transfer of a phosphate group between first a His and an Asp of the HK protein, followed by the transfer to a conserved His of the HPt protein and finally the transfer to an Asp in the receiver domain of the RR protein. As to expression, detected in the whole plant. Predominantly expressed in roots and leaves.

Its subcellular location is the nucleus. In terms of biological role, transcriptional activator that binds specifically to the DNA sequence 5'-[AG]GATT-3'. Functions as a response regulator involved in His-to-Asp phosphorelay signal transduction system. Phosphorylation of the Asp residue in the receiver domain activates the ability of the protein to promote the transcription of target genes. Could directly activate some type-A response regulators in response to cytokinins. The chain is Two-component response regulator ARR10 (ARR10) from Arabidopsis thaliana (Mouse-ear cress).